The chain runs to 416 residues: UDP-N-acetylmuramoylalanine--D-glutamate ligase (416 aa).

104 to 110 serves as a coordination point for ATP; it reads GSNGKST.

The protein belongs to the MurCDEF family.

The protein resides in the cytoplasm. The enzyme catalyses UDP-N-acetyl-alpha-D-muramoyl-L-alanine + D-glutamate + ATP = UDP-N-acetyl-alpha-D-muramoyl-L-alanyl-D-glutamate + ADP + phosphate + H(+). It participates in cell wall biogenesis; peptidoglycan biosynthesis. Functionally, cell wall formation. Catalyzes the addition of glutamate to the nucleotide precursor UDP-N-acetylmuramoyl-L-alanine (UMA). The chain is UDP-N-acetylmuramoylalanine--D-glutamate ligase from Francisella tularensis subsp. tularensis (strain WY96-3418).